Reading from the N-terminus, the 122-residue chain is Photosystem II extrinsic protein U (122 aa).

The N-terminal stretch at 1-30 (MRWLLSILVRVVLVLCLCFAPLGIPVVARA) is a signal peptide.

This sequence belongs to the PsbU family. In terms of assembly, PSII is composed of 1 copy each of membrane proteins PsbA, PsbB, PsbC, PsbD, PsbE, PsbF, PsbH, PsbI, PsbJ, PsbK, PsbL, PsbM, PsbT, PsbX, PsbY, PsbZ, Psb30/Ycf12, peripheral proteins PsbO, CyanoQ (PsbQ), PsbU, PsbV and a large number of cofactors. It forms dimeric complexes.

The protein resides in the cellular thylakoid membrane. In terms of biological role, one of the extrinsic, lumenal subunits of photosystem II (PSII). PSII is a light-driven water plastoquinone oxidoreductase, using light energy to abstract electrons from H(2)O, generating a proton gradient subsequently used for ATP formation. The extrinsic proteins stabilize the structure of photosystem II oxygen-evolving complex (OEC), the ion environment of oxygen evolution and protect the OEC against heat-induced inactivation. The chain is Photosystem II extrinsic protein U from Synechococcus sp. (strain JA-2-3B'a(2-13)) (Cyanobacteria bacterium Yellowstone B-Prime).